We begin with the raw amino-acid sequence, 445 residues long: tRNA(Ile)-lysidine synthase (445 aa).

Residue 33-38 coordinates ATP; that stretch reads SGGLDS.

This sequence belongs to the tRNA(Ile)-lysidine synthase family.

Its subcellular location is the cytoplasm. The enzyme catalyses cytidine(34) in tRNA(Ile2) + L-lysine + ATP = lysidine(34) in tRNA(Ile2) + AMP + diphosphate + H(+). Its function is as follows. Ligates lysine onto the cytidine present at position 34 of the AUA codon-specific tRNA(Ile) that contains the anticodon CAU, in an ATP-dependent manner. Cytidine is converted to lysidine, thus changing the amino acid specificity of the tRNA from methionine to isoleucine. The protein is tRNA(Ile)-lysidine synthase of Pseudomonas syringae pv. tomato (strain ATCC BAA-871 / DC3000).